The following is a 776-amino-acid chain: DExH-box ATP-dependent RNA helicase DExH18, mitochondrial (776 aa).

Residues 1–84 (MARGVAGVLR…RSFSSTVDNN (84 aa)) constitute a mitochondrion transit peptide. The segment at 80–101 (TVDNNGENDDIEESVGSESDDY) is disordered. The span at 85 to 101 (GENDDIEESVGSESDDY) shows a compositional bias: acidic residues. The region spanning 268-426 (FARAMKRKIV…RFKPLVVEAK (159 aa)) is the Helicase ATP-binding domain. 281 to 288 (GPTNSGKT) serves as a coordination point for ATP. The short motif at 361-364 (DEIQ) is the DEIH box; degenerate element. In terms of domain architecture, Helicase C-terminal spans 427–595 (TLLGELKNVK…LFAAQVPDMA (169 aa)).

This sequence belongs to the DExH box helicase family. As to quaternary structure, homodimer; in free form. Component of the mitochondrial degradosome (mtEXO) complex which is a heteropentamer containing 2 copies of SUPV3L1 and 3 copies of PNPT1. Mg(2+) serves as cofactor. It depends on Mn(2+) as a cofactor.

It localises to the nucleus. The protein resides in the mitochondrion matrix. The protein localises to the mitochondrion nucleoid. The enzyme catalyses ATP + H2O = ADP + phosphate + H(+). Functionally, major helicase player in mitochondrial RNA metabolism. Component of the mitochondrial degradosome (mtEXO) complex, that degrades 3' overhang double-stranded RNA with a 3'-to-5' directionality in an ATP-dependent manner. ATPase and ATP-dependent multisubstrate helicase, able to unwind double-stranded (ds) DNA and RNA, and RNA/DNA heteroduplexes in the 5'-to-3' direction. Plays a role in the RNA surveillance system in mitochondria; regulates the stability of mature mRNAs, the removal of aberrantly formed mRNAs and the rapid degradation of non coding processing intermediates. This is DExH-box ATP-dependent RNA helicase DExH18, mitochondrial from Arabidopsis thaliana (Mouse-ear cress).